A 159-amino-acid chain; its full sequence is Ribosomal RNA large subunit methyltransferase H (159 aa).

S-adenosyl-L-methionine contacts are provided by residues L76, G108, and 127–132 (FSKMTF).

This sequence belongs to the RNA methyltransferase RlmH family. Homodimer.

The protein localises to the cytoplasm. It catalyses the reaction pseudouridine(1915) in 23S rRNA + S-adenosyl-L-methionine = N(3)-methylpseudouridine(1915) in 23S rRNA + S-adenosyl-L-homocysteine + H(+). Specifically methylates the pseudouridine at position 1915 (m3Psi1915) in 23S rRNA. The chain is Ribosomal RNA large subunit methyltransferase H from Bifidobacterium longum (strain DJO10A).